A 653-amino-acid polypeptide reads, in one-letter code: Dystrotelin (653 aa).

The segment at 223–279 adopts a ZZ-type zinc-finger fold; the sequence is THPVRCSVCRTFPIIGLRYHCLKCLDFDICELCFLSGLHKNSHEKSHTVMEECVQMS. Residues cysteine 228, cysteine 231, cysteine 243, cysteine 246, cysteine 252, cysteine 255, histidine 265, and histidine 269 each contribute to the Zn(2+) site. A coiled-coil region spans residues 384-411; it reads RDSLNTLLRERRLLRKQLHRYKQKLQGT.

Strongly expressed in the nervous and muscular tissues.

The protein resides in the cell membrane. This is Dystrotelin (Dytn) from Mus musculus (Mouse).